The primary structure comprises 460 residues: Pentatricopeptide repeat-containing protein At5g43790 (460 aa).

PPR repeat units follow at residues serine 70–phenylalanine 107, asparagine 111–phenylalanine 142, aspartate 149–proline 179, aspartate 180–proline 214, asparagine 215–leucine 249, asparagine 250–arginine 280, aspartate 281–proline 315, aspartate 316–proline 351, and lysine 352–lysine 382. The type E motif; degenerate stretch occupies residues leucine 387 to asparagine 460.

Belongs to the PPR family. PCMP-E subfamily.

This chain is Pentatricopeptide repeat-containing protein At5g43790 (PCMP-E30), found in Arabidopsis thaliana (Mouse-ear cress).